Reading from the N-terminus, the 1195-residue chain is Phosphatidylinositol-3,5-bisphosphate 3-phosphatase MTMR4 (1195 aa).

The residue at position 8 (serine 8) is a Phosphoserine. The region spanning 153 to 570 (EHIRCRQEAE…RALHLWTAVY (418 aa)) is the Myotubularin phosphatase domain. Asparagine 320, asparagine 345, and isoleucine 346 together coordinate a 1,2-diacyl-sn-glycero-3-phospho-(1D-myo-inositol-3,5-bisphosphate). Residues asparagine 320, asparagine 345, and isoleucine 346 each contribute to the a 1,2-diacyl-sn-glycero-3-phospho-(1D-myo-inositol-3-phosphate) site. Cysteine 407 acts as the Phosphocysteine intermediate in catalysis. Positions 408, 409, 410, 411, 412, 413, 449, and 453 each coordinate a 1,2-diacyl-sn-glycero-3-phospho-(1D-myo-inositol-3,5-bisphosphate). A 1,2-diacyl-sn-glycero-3-phospho-(1D-myo-inositol-3-phosphate) is bound by residues serine 408, aspartate 409, glycine 410, tryptophan 411, aspartate 412, and arginine 413. Arginine 453 provides a ligand contact to a 1,2-diacyl-sn-glycero-3-phospho-(1D-myo-inositol-3-phosphate). 2 positions are modified to phosphoserine: serine 610 and serine 629. Disordered regions lie at residues 645–756 (EPWH…EHCP), 780–800 (ESSQ…SMLG), and 827–877 (DPST…LLEN). Positions 720–729 (PEIKVLEETK) are enriched in basic and acidic residues. Composition is skewed to polar residues over residues 780-795 (ESSQ…QAQP) and 831-854 (DFLN…SSVP). The short motif at 1004–1008 (VPPLY) is the PY-motif; substrate motif for NEDD4 element. A coiled-coil region spans residues 1023–1055 (HRLRQIEAGYKQEVEQLRRQVRELQMRLDIRHC). The FYVE-type zinc finger occupies 1114-1174 (DHMASHCYNC…VCNSCYEHIQ (61 aa)). Zn(2+) contacts are provided by cysteine 1120, cysteine 1123, cysteine 1136, cysteine 1139, cysteine 1144, cysteine 1147, cysteine 1166, and cysteine 1169.

It belongs to the protein-tyrosine phosphatase family. Non-receptor class myotubularin subfamily. As to quaternary structure, homooligomeric. Forms MTMR3:MTMR4 heterooligomers; regulates the localization of both proteins. The MTMR3:MTMR4 heterooligomer can also recruit both CEP55 and PLK1; occurs during early mitosis, regulates the phosphorylation of CEP55 by PLK1 and its recruitment to the midbody where it can mediate cell abscission. Interacts with SMAD2 and SMAD3; negatively regulates TGF-beta signaling through SMAD2 and SMAD3 dephosphorylation and retention in endosomes. Interacts with SMAD1; negatively regulates BMP signaling through SMAD1 dephosphorylation and retention in endosomes. In terms of processing, ubiquitinated. Ubiquitination by NEDD4 probably leads to proteasomal degradation. Phosphorylated by CDK1 during mitosis. As to expression, expressed in brain, heart, kidney, spleen, liver, colon, testis, muscle, placenta, thyroid gland, pancreas, ovary, prostate, skin, peripheral blood, and bone marrow.

The protein localises to the early endosome membrane. It is found in the recycling endosome membrane. It localises to the late endosome membrane. Its subcellular location is the cytoplasmic vesicle. The protein resides in the phagosome membrane. The catalysed reaction is a 1,2-diacyl-sn-glycero-3-phospho-(1D-myo-inositol-3-phosphate) + H2O = a 1,2-diacyl-sn-glycero-3-phospho-(1D-myo-inositol) + phosphate. It carries out the reaction a 1,2-diacyl-sn-glycero-3-phospho-(1D-myo-inositol-3,5-bisphosphate) + H2O = a 1,2-diacyl-sn-glycero-3-phospho-(1D-myo-inositol-5-phosphate) + phosphate. The enzyme catalyses 1,2-dioctanoyl-sn-glycero-3-phospho-(1-D-myo-inositol-3-phosphate) + H2O = 1,2-dioctanoyl-sn-glycero-3-phospho-(1D-myo-inositol) + phosphate. It catalyses the reaction 1,2-dioctanoyl-sn-glycero-3-phospho-(1D-myo-inositol-3,5-bisphosphate) + H2O = 1,2-dioctanoyl-sn-glycero-3-phospho-(1D-myo-inositol-5-phosphate) + phosphate. The phosphatidylinositol-3-phosphate phosphatase activity is inhibited by vanadate. Its function is as follows. Lipid phosphatase that specifically dephosphorylates the D-3 position of phosphatidylinositol 3-phosphate and phosphatidylinositol 3,5-bisphosphate, generating phosphatidylinositol and phosphatidylinositol 5-phosphate. Decreases the levels of phosphatidylinositol 3-phosphate, a phospholipid found in cell membranes where it acts as key regulator of both cell signaling and intracellular membrane traffic, in a subset of endosomal membranes to negatively regulate both endocytic recycling and trafficking and/or maturation of endosomes toward lysosomes. Through phosphatidylinositol 3-phosphate turnover in phagosome membranes regulates phagocytosis and phagosome maturation. By decreasing phosphatidylinositol 3-monophosphate (PI3P) levels in immune cells it can also regulate the innate immune response. Beside its lipid phosphatase activity, can also function as a molecular adapter to regulate midbody abscission during mitotic cytokinesis. Can also negatively regulate TGF-beta and BMP signaling through Smad proteins dephosphorylation and retention in endosomes. This chain is Phosphatidylinositol-3,5-bisphosphate 3-phosphatase MTMR4, found in Homo sapiens (Human).